A 451-amino-acid chain; its full sequence is Tubulin beta-1 chain (451 aa).

The short motif at 1 to 4 (MREI) is the MREI motif element. GTP-binding residues include glutamine 11, glutamate 69, serine 138, glycine 142, threonine 143, and glycine 144. Glutamate 69 provides a ligand contact to Mg(2+). Residue serine 172 is modified to Phosphoserine; by CDK1. GTP is bound by residues asparagine 204 and asparagine 226. Positions 430–451 (AGLEDSEEDVEEAEVEAEDKDH) are disordered. Acidic residues predominate over residues 433-451 (EDSEEDVEEAEVEAEDKDH). Position 435 is a phosphoserine (serine 435). The residue at position 440 (glutamate 440) is a 5-glutamyl polyglutamate.

It belongs to the tubulin family. As to quaternary structure, dimer of alpha and beta chains. A typical microtubule is a hollow water-filled tube with an outer diameter of 25 nm and an inner diameter of 15 nM. Alpha-beta heterodimers associate head-to-tail to form protofilaments running lengthwise along the microtubule wall with the beta-tubulin subunit facing the microtubule plus end conferring a structural polarity. Microtubules usually have 13 protofilaments but different protofilament numbers can be found in some organisms and specialized cells. Interacts with RANBP10. Mg(2+) is required as a cofactor. Post-translationally, some glutamate residues at the C-terminus are polyglycylated, resulting in polyglycine chains on the gamma-carboxyl group. Glycylation is mainly limited to tubulin incorporated into axonemes (cilia and flagella) whereas glutamylation is prevalent in neuronal cells, centrioles, axonemes, and the mitotic spindle. Both modifications can coexist on the same protein on adjacent residues, and lowering polyglycylation levels increases polyglutamylation, and reciprocally. Cilia and flagella glycylation is required for their stability and maintenance. Flagella glycylation controls sperm motility. Some glutamate residues at the C-terminus are polyglutamylated, resulting in polyglutamate chains on the gamma-carboxyl group. Polyglutamylation plays a key role in microtubule severing by spastin (SPAST). SPAST preferentially recognizes and acts on microtubules decorated with short polyglutamate tails: severing activity by SPAST increases as the number of glutamates per tubulin rises from one to eight, but decreases beyond this glutamylation threshold. Glutamylation is also involved in cilia motility. In terms of processing, phosphorylated on Ser-172 by CDK1 during the cell cycle, from metaphase to telophase, but not in interphase. This phosphorylation inhibits tubulin incorporation into microtubules.

It localises to the cytoplasm. It is found in the cytoskeleton. In terms of biological role, tubulin is the major constituent of microtubules, a cylinder consisting of laterally associated linear protofilaments composed of alpha- and beta-tubulin heterodimers. Microtubules grow by the addition of GTP-tubulin dimers to the microtubule end, where a stabilizing cap forms. Below the cap, tubulin dimers are in GDP-bound state, owing to GTPase activity of alpha-tubulin. This is Tubulin beta-1 chain (Tubb1) from Mus musculus (Mouse).